A 371-amino-acid chain; its full sequence is N-acetyldiaminopimelate deacetylase (371 aa).

Residue Asp-68 is part of the active site. The active-site Proton acceptor is Glu-127.

It belongs to the peptidase M20A family. N-acetyldiaminopimelate deacetylase subfamily.

The catalysed reaction is N-acetyl-(2S,6S)-2,6-diaminopimelate + H2O = (2S,6S)-2,6-diaminopimelate + acetate. Its pathway is amino-acid biosynthesis; L-lysine biosynthesis via DAP pathway; LL-2,6-diaminopimelate from (S)-tetrahydrodipicolinate (acetylase route): step 3/3. In terms of biological role, catalyzes the conversion of N-acetyl-diaminopimelate to diaminopimelate and acetate. The polypeptide is N-acetyldiaminopimelate deacetylase (Listeria monocytogenes serovar 1/2a (strain ATCC BAA-679 / EGD-e)).